A 483-amino-acid polypeptide reads, in one-letter code: UDP-N-acetylmuramoyl-L-alanyl-D-glutamate--2,6-diaminopimelate ligase (483 aa).

S29 is a binding site for UDP-N-acetyl-alpha-D-muramoyl-L-alanyl-D-glutamate. 112-118 (GTNGKTT) is a binding site for ATP. Residues 154–155 (TT), S181, and R189 each bind UDP-N-acetyl-alpha-D-muramoyl-L-alanyl-D-glutamate. The residue at position 221 (K221) is an N6-carboxylysine. Meso-2,6-diaminopimelate is bound by residues R380, 404–407 (DNPR), G454, and E458. A Meso-diaminopimelate recognition motif motif is present at residues 404–407 (DNPR).

The protein belongs to the MurCDEF family. MurE subfamily. Mg(2+) serves as cofactor. In terms of processing, carboxylation is probably crucial for Mg(2+) binding and, consequently, for the gamma-phosphate positioning of ATP.

The protein resides in the cytoplasm. It carries out the reaction UDP-N-acetyl-alpha-D-muramoyl-L-alanyl-D-glutamate + meso-2,6-diaminopimelate + ATP = UDP-N-acetyl-alpha-D-muramoyl-L-alanyl-gamma-D-glutamyl-meso-2,6-diaminopimelate + ADP + phosphate + H(+). It functions in the pathway cell wall biogenesis; peptidoglycan biosynthesis. In terms of biological role, catalyzes the addition of meso-diaminopimelic acid to the nucleotide precursor UDP-N-acetylmuramoyl-L-alanyl-D-glutamate (UMAG) in the biosynthesis of bacterial cell-wall peptidoglycan. This chain is UDP-N-acetylmuramoyl-L-alanyl-D-glutamate--2,6-diaminopimelate ligase, found in Clostridium botulinum (strain ATCC 19397 / Type A).